Here is a 351-residue protein sequence, read N- to C-terminus: Peptide chain release factor 1 (351 aa).

Gln-229 carries the post-translational modification N5-methylglutamine.

Belongs to the prokaryotic/mitochondrial release factor family. Post-translationally, methylated by PrmC. Methylation increases the termination efficiency of RF1.

The protein resides in the cytoplasm. Peptide chain release factor 1 directs the termination of translation in response to the peptide chain termination codons UAG and UAA. In Cereibacter sphaeroides (strain ATCC 17023 / DSM 158 / JCM 6121 / CCUG 31486 / LMG 2827 / NBRC 12203 / NCIMB 8253 / ATH 2.4.1.) (Rhodobacter sphaeroides), this protein is Peptide chain release factor 1.